We begin with the raw amino-acid sequence, 425 residues long: Serine--tRNA ligase (425 aa).

The interval 110 to 134 (NLPSADAPEGKSEADNVEVKRWGEP) is disordered. A compositionally biased stretch (basic and acidic residues) spans 117–134 (PEGKSEADNVEVKRWGEP). L-serine is bound at residue 233-235 (TAE). 264 to 266 (RRE) lines the ATP pocket. Position 287 (E287) interacts with L-serine. 351 to 354 (EISS) provides a ligand contact to ATP. S385 contacts L-serine.

It belongs to the class-II aminoacyl-tRNA synthetase family. Type-1 seryl-tRNA synthetase subfamily. Homodimer. The tRNA molecule binds across the dimer.

It is found in the cytoplasm. It catalyses the reaction tRNA(Ser) + L-serine + ATP = L-seryl-tRNA(Ser) + AMP + diphosphate + H(+). It carries out the reaction tRNA(Sec) + L-serine + ATP = L-seryl-tRNA(Sec) + AMP + diphosphate + H(+). It functions in the pathway aminoacyl-tRNA biosynthesis; selenocysteinyl-tRNA(Sec) biosynthesis; L-seryl-tRNA(Sec) from L-serine and tRNA(Sec): step 1/1. In terms of biological role, catalyzes the attachment of serine to tRNA(Ser). Is also able to aminoacylate tRNA(Sec) with serine, to form the misacylated tRNA L-seryl-tRNA(Sec), which will be further converted into selenocysteinyl-tRNA(Sec). The polypeptide is Serine--tRNA ligase (Synechococcus sp. (strain RCC307)).